Reading from the N-terminus, the 837-residue chain is Granulocyte colony-stimulating factor receptor (837 aa).

A signal peptide spans 1 to 25; sequence MVGLGACTLTGVTLIFLLLPRSLES. 2 cysteine pairs are disulfide-bonded: C26–C52 and C46–C102. Residues 26–118 enclose the Ig-like C2-type domain; that stretch reads CGHIEISPPV…SVQLLDQAEL (93 aa). Residues 26–626 lie on the Extracellular side of the membrane; that stretch reads CGHIEISPPV…LTLRTLDPSD (601 aa). N51, N94, and N129 each carry an N-linked (GlcNAc...) asparagine glycan. 5 Fibronectin type-III domains span residues 126-231, 236-331, 334-433, 434-529, and 530-624; these read SPSN…LEPP, LDIG…LRPT, APTI…NEGP, AVTG…GERA, and PPHA…TLDP. 5 disulfides stabilise this stretch: C132-C143, C168-C219, C178-C187, C249-C296, and C267-C310. Residues N186 and N279 are each glycosylated (N-linked (GlcNAc...) asparagine). The WSXWS motif motif lies at 319–323; the sequence is WSPWS. N-linked (GlcNAc...) asparagine glycans are attached at residues N392, N408, N474, N487, N582, and N613. The helical transmembrane segment at 627 to 650 threads the bilayer; sequence LNIFLGILCLVLLSTTCVVTWLCC. Topologically, residues 651–837 are cytoplasmic; that stretch reads KRRGKTSFWS…VHGVEEQGGF (187 aa). Positions 658–666 match the Box 1 motif motif; that stretch reads FWSDVPDPA.

This sequence belongs to the type I cytokine receptor family. Type 2 subfamily. In terms of assembly, homodimer. The dimeric receptor binds two CSF3 molecules. Interacts with CEACAM1; down-regulates the CSF3R-STAT3 pathway through recruitment of PTPN6 that dephosphorylates CSF3R. Post-translationally, N-glycosylated. As to expression, found in bone marrow.

It is found in the membrane. Receptor for granulocyte colony-stimulating factor (CSF3). In addition it may function in some adhesion or recognition events at the cell surface. The sequence is that of Granulocyte colony-stimulating factor receptor (Csf3r) from Mus musculus (Mouse).